We begin with the raw amino-acid sequence, 174 residues long: MATGPRYKVPFRRRREGRTNYHLRLKLLLSGQDRVVVRKSARNVQIQLLAPTPEGDITYSSAVSSELAKYGYTGATGNTTAAYLTGLLFGLKSLQKGYEGGILDIGLQASSAGSRVYAALKGIVDSGFEIPCSSDVFPSDERIRGEHIAEYREESSDLPEQFEATKEKIFAEFS.

Belongs to the universal ribosomal protein uL18 family. In terms of assembly, part of the 50S ribosomal subunit. Contacts the 5S and 23S rRNAs.

This is one of the proteins that bind and probably mediate the attachment of the 5S RNA into the large ribosomal subunit, where it forms part of the central protuberance. The sequence is that of Large ribosomal subunit protein uL18 from Methanosarcina mazei (strain ATCC BAA-159 / DSM 3647 / Goe1 / Go1 / JCM 11833 / OCM 88) (Methanosarcina frisia).